The chain runs to 200 residues: Pyridoxal 5'-phosphate synthase subunit PdxT (200 aa).

An L-glutamine-binding site is contributed by 52–54; sequence GES. Residue cysteine 84 is the Nucleophile of the active site. L-glutamine-binding positions include arginine 115 and 143–144; that span reads IR. Active-site charge relay system residues include histidine 179 and glutamate 181.

It belongs to the glutaminase PdxT/SNO family. In terms of assembly, in the presence of PdxS, forms a dodecamer of heterodimers. Only shows activity in the heterodimer.

The enzyme catalyses aldehydo-D-ribose 5-phosphate + D-glyceraldehyde 3-phosphate + L-glutamine = pyridoxal 5'-phosphate + L-glutamate + phosphate + 3 H2O + H(+). It carries out the reaction L-glutamine + H2O = L-glutamate + NH4(+). The protein operates within cofactor biosynthesis; pyridoxal 5'-phosphate biosynthesis. In terms of biological role, catalyzes the hydrolysis of glutamine to glutamate and ammonia as part of the biosynthesis of pyridoxal 5'-phosphate. The resulting ammonia molecule is channeled to the active site of PdxS. The chain is Pyridoxal 5'-phosphate synthase subunit PdxT from Methanosarcina barkeri (strain Fusaro / DSM 804).